The primary structure comprises 194 residues: Ribonuclease HII (194 aa).

The region spanning 3–193 (ILTAGVDEAG…VRNLLAQQAL (191 aa)) is the RNase H type-2 domain. A divalent metal cation contacts are provided by Asp9, Glu10, and Asp101.

This sequence belongs to the RNase HII family. Mn(2+) serves as cofactor. Mg(2+) is required as a cofactor.

It is found in the cytoplasm. It catalyses the reaction Endonucleolytic cleavage to 5'-phosphomonoester.. Endonuclease that specifically degrades the RNA of RNA-DNA hybrids. This is Ribonuclease HII (rnhB) from Neisseria meningitidis serogroup B (strain ATCC BAA-335 / MC58).